A 323-amino-acid polypeptide reads, in one-letter code: MRFLGISGGSAGGNTEQALLAALRAAQTAAKTPATISLVRLKELSIGSGALDGHLPLPVVGKSNSTGPVSDDRPFILDQIMEADAIILGAPCITRTIPWEVKCFQDSTLGPFQDVTMAQKLVDAGKGHLVDQRIFKPRVLALVTLGGAFTTEWAPFTLPLLHQVFFPLGTQIVDQMQVFGTGVPDSFLLNSEAMVRAEELGRNLAQQAQATTEGEATYVGPRGMCPICHLSMFNFVGRDAVECATCGAKGRMGVGDDGHVEFVTDSEGESFSVLRRSGLKKHLQDLEQGLQAEGASTKVLDIKNELLKLGQSWVVAPPSRGGR.

FMN is required as a cofactor.

Its pathway is secondary metabolite biosynthesis; flavonoid biosynthesis. FMN-dependent oxidoreductase; part of the gene cluster that mediates the biosynthesis of chlorflavonin, a fungal flavonoid with acetolactate synthase inhibitory activity. Within the pathway, cfoJ acts as a flavone synthase (FNS) and catalyzes the formation of a double bond between C2 and C3, converting the flavanone into a flavone. The pathway begins with the PKS-NRPS hybrid synthetase cfoA that uses benzoic acid or p-hydroxybenzoic acid as a starter unit with four rounds of chain elongation using malonyl-CoA to form the chalcone skeleton. Then, a new type of chalcone isomerase, cfoK, catalyzes the conversion of the chalcone into a flavanone by a histidine-mediated oxa-Michael addition mechanism. The desaturation of flavanone to flavone is catalyzed by a new type of flavone synthase, the flavin mononucleotide (FMN)-dependent oxidoreductase cfoJ. Monooxygenases cfoF, cfoG, and P450 cfoH are responsible for the hydroxylation of the flavonoid skeleton at sites C3, C8, and C2', respectively. Like cfoF, the dehydratase cfoI plays also a role in the hydroxylation of position C3. Methyltransferases cfoB, cfoC, and cfoD then catalyze the methylation of C7-OH, C8-OH, and C3-OH, respectively. Finally, the monooxygenase cfoE is responsible for the chlorination of flavonoid at position C3'. The polypeptide is Flavone synthase cfoJ (Aspergillus candidus).